The primary structure comprises 95 residues: Large ribosomal subunit protein bL25 (95 aa).

Belongs to the bacterial ribosomal protein bL25 family. As to quaternary structure, part of the 50S ribosomal subunit; part of the 5S rRNA/L5/L18/L25 subcomplex. Contacts the 5S rRNA. Binds to the 5S rRNA independently of L5 and L18.

In terms of biological role, this is one of the proteins that binds to the 5S RNA in the ribosome where it forms part of the central protuberance. In Mannheimia succiniciproducens (strain KCTC 0769BP / MBEL55E), this protein is Large ribosomal subunit protein bL25.